Consider the following 1733-residue polypeptide: Gag-Pol polyprotein (1733 aa).

The N-myristoyl glycine; by host moiety is linked to residue G2. Pro residues predominate over residues L108–Q121. 3 disordered regions span residues L108 to G218, K449 to H469, and W511 to I550. A PTAP/PSAP motif motif is present at residues P109–P112. An LYPX(n)L motif motif is present at residues L128–L132. A PPXY motif motif is present at residues P161 to Y164. S190 is subject to Phosphoserine; by host. Positions E436–L476 form a coiled coil. A compositionally biased stretch (basic and acidic residues) spans K449–R464. The CCHC-type zinc-finger motif lies at D500 to K517. Low complexity predominate over residues R526 to G535. The region spanning V559–L629 is the Peptidase A2 domain. D564 functions as the Protease; shared with dimeric partner in the catalytic mechanism. Positions 721, 771, 773, and 787 each coordinate RNA. Residues L739–L930 form the Reverse transcriptase domain. D807 serves as a coordination point for Mg(2+). RNA contacts are provided by N851 and P853. Residues D881 and D882 each contribute to the Mg(2+) site. Residues R941, R955, R958, and F966 each coordinate DNA. RNA contacts are provided by K1054 and K1055. W1063 contacts DNA. K1082 provides a ligand contact to RNA. R1113 contributes to the DNA binding site. The 147-residue stretch at P1172–M1318 folds into the RNase H type-1 domain. D1181 lines the Mg(2+) pocket. Residues S1184 and L1186 each coordinate RNA. Residues Q1187, S1214, and Q1216 each coordinate DNA. Mg(2+) is bound by residues E1219 and D1240. 2 residues coordinate RNA: R1242 and R1266. D1310, D1453, and D1512 together coordinate Mg(2+). In terms of domain architecture, Integrase catalytic spans R1442–P1600.

In terms of assembly, homohexamer. Further associates as homomultimer. The virus core is composed of a lattice formed from hexagonal rings, each containing six capsid monomers. As to quaternary structure, homodimer. The protease is a homodimer, whose active site consists of two apposed aspartic acid residues. The reverse transcriptase is a monomer. Mg(2+) serves as cofactor. Requires Mn(2+) as cofactor. In terms of processing, specific enzymatic cleavages by the viral protease yield mature proteins. The protease is released by autocatalytic cleavage. The polyprotein is cleaved during and after budding, this process is termed maturation. Sumoylated. Required for virus replication. Post-translationally, phosphorylated on serine residues.

It localises to the host cell membrane. It is found in the virion. It catalyses the reaction DNA(n) + a 2'-deoxyribonucleoside 5'-triphosphate = DNA(n+1) + diphosphate. It carries out the reaction Endonucleolytic cleavage to 5'-phosphomonoester.. In terms of biological role, plays a role in budding and is processed by the viral protease during virion maturation outside the cell. During budding, it recruits, in a PPXY-dependent or independent manner, Nedd4-like ubiquitin ligases that conjugate ubiquitin molecules to Gag, or to Gag binding host factors. Interaction with HECT ubiquitin ligases probably link the viral protein to the host ESCRT pathway and facilitate release. Targets Gag and gag-pol polyproteins to the plasma membrane via a multipartite membrane binding signal, that includes its myristoylated N-terminus. Also mediates nuclear localization of the pre-integration complex. Its function is as follows. Forms the spherical core of the virion that encapsulates the genomic RNA-nucleocapsid complex. Functionally, involved in the packaging and encapsidation of two copies of the genome. Binds with high affinity to conserved UCUG elements within the packaging signal, located near the 5'-end of the genome. This binding is dependent on genome dimerization. In terms of biological role, the aspartyl protease mediates proteolytic cleavages of Gag and Gag-Pol polyproteins during or shortly after the release of the virion from the plasma membrane. Cleavages take place as an ordered, step-wise cascade to yield mature proteins. This process is called maturation. Displays maximal activity during the budding process just prior to particle release from the cell. Multifunctional enzyme that converts the viral dimeric RNA genome into dsDNA in the cytoplasm, shortly after virus entry into the cell. This enzyme displays a DNA polymerase activity that can copy either DNA or RNA templates, and a ribonuclease H (RNase H) activity that cleaves the RNA strand of RNA-DNA heteroduplexes in a partially processive 3' to 5' endonucleasic mode. Conversion of viral genomic RNA into dsDNA requires many steps. A tRNA binds to the primer-binding site (PBS) situated at the 5' end of the viral RNA. RT uses the 3' end of the tRNA primer to perform a short round of RNA-dependent minus-strand DNA synthesis. The reading proceeds through the U5 region and ends after the repeated (R) region which is present at both ends of viral RNA. The portion of the RNA-DNA heteroduplex is digested by the RNase H, resulting in a ssDNA product attached to the tRNA primer. This ssDNA/tRNA hybridizes with the identical R region situated at the 3' end of viral RNA. This template exchange, known as minus-strand DNA strong stop transfer, can be either intra- or intermolecular. RT uses the 3' end of this newly synthesized short ssDNA to perform the RNA-dependent minus-strand DNA synthesis of the whole template. RNase H digests the RNA template except for a polypurine tract (PPT) situated at the 5' end of the genome. It is not clear if both polymerase and RNase H activities are simultaneous. RNase H probably can proceed both in a polymerase-dependent (RNA cut into small fragments by the same RT performing DNA synthesis) and a polymerase-independent mode (cleavage of remaining RNA fragments by free RTs). Secondly, RT performs DNA-directed plus-strand DNA synthesis using the PPT that has not been removed by RNase H as primers. PPT and tRNA primers are then removed by RNase H. The 3' and 5' ssDNA PBS regions hybridize to form a circular dsDNA intermediate. Strand displacement synthesis by RT to the PBS and PPT ends produces a blunt ended, linear dsDNA copy of the viral genome that includes long terminal repeats (LTRs) at both ends. Its function is as follows. Catalyzes viral DNA integration into the host chromosome, by performing a series of DNA cutting and joining reactions. This enzyme activity takes place after virion entry into a cell and reverse transcription of the RNA genome in dsDNA. The first step in the integration process is 3' processing. This step requires a complex comprising the viral genome, matrix protein and integrase. This complex is called the pre-integration complex (PIC). The integrase protein removes 2 nucleotides from each 3' end of the viral DNA, leaving recessed CA OH's at the 3' ends. In the second step that requires cell division, the PIC enters cell nucleus. In the third step, termed strand transfer, the integrase protein joins the previously processed 3' ends to the 5' ends of strands of target cellular DNA at the site of integration. The last step is viral DNA integration into host chromosome. This Homo sapiens (Human) protein is Gag-Pol polyprotein (gag-pol).